Consider the following 68-residue polypeptide: Sec-independent protein translocase protein TatA (68 aa).

A helical membrane pass occupies residues 1-21 (MGSFSIWHWLIVLAVVLLLFG). The disordered stretch occupies residues 42 to 68 (GMGDDEVASADKSVDGKTVDHKSDEVR). The span at 53-68 (KSVDGKTVDHKSDEVR) shows a compositional bias: basic and acidic residues.

It belongs to the TatA/E family. The Tat system comprises two distinct complexes: a TatABC complex, containing multiple copies of TatA, TatB and TatC subunits, and a separate TatA complex, containing only TatA subunits. Substrates initially bind to the TatABC complex, which probably triggers association of the separate TatA complex to form the active translocon.

It is found in the cell inner membrane. In terms of biological role, part of the twin-arginine translocation (Tat) system that transports large folded proteins containing a characteristic twin-arginine motif in their signal peptide across membranes. TatA could form the protein-conducting channel of the Tat system. The protein is Sec-independent protein translocase protein TatA of Rhizobium meliloti (strain 1021) (Ensifer meliloti).